The following is a 177-amino-acid chain: MSRVGKLPITIPEGVKIGLNDLEVKISGPKGELSKTFKGNIAISLAENKLLVKPLAAKKNARAMWGTARSIISNMVTGVKEGFKLKLEINGVGYRAMVKGKYLNLMLAKSHNTKIEIPSDIKIEMPKQNIIILEGTDKEKLGQFASIIIKQRPPEPYKGKGIKFENQFIPRKEGKKN.

Belongs to the universal ribosomal protein uL6 family. In terms of assembly, part of the 50S ribosomal subunit.

Functionally, this protein binds to the 23S rRNA, and is important in its secondary structure. It is located near the subunit interface in the base of the L7/L12 stalk, and near the tRNA binding site of the peptidyltransferase center. The polypeptide is Large ribosomal subunit protein uL6 (Rickettsia rickettsii (strain Iowa)).